Here is an 856-residue protein sequence, read N- to C-terminus: MNVIDTDDLEKHTPMMRQYLTMKAEHHDMLLFYRMGDFYELFYDDAKRASELLGISLTARGKSGGDPIPMAGLPYHAVEGYLAKLVQIGQSVAICEQIGDPATSKGPVERKVVRIVTPGTLTDEALLQERQDNLLAAVYQGKIGFGYATLDVSSGRFVIAELDTRESLEAELQRTNPVEILYSEDFGELGLLNGFKGKRRRPEWEFDYDTSIKLLLTQFGTKDLHGFGIADARLSLQAAGCLMQYVKDTQRTALPHINAITRFNQTDSIVLDAATRRNLELTQNLAGGRDNTLAAVLDNTATPMGSRMLQRWIHQPLRDPKHIKARQQAVTELLDTTAHEGLHEQLKALGDIERIMARLALRTARPRDFARLRQALGLLPELQQSLSTLSAPHTTQLRQHIGEFPAEQALLERAIVDNPPMLIRDGGVIREGYNSELDEWRGLSEGASDYLVQLEAREKERTGINTLKVGYNRVHGYYIEVSRLQSSQVPLNYQRRQTLKNMERYITPELKEYEEKVLSSQGKALALEKQLWEQLFDLILPKLHELQAFARAAAELDVLSNFAERAETLGYTCPELSQDIGVQIEAGRHPVVERVSQTPFIANPVTLHNQRRMLIVTGPNMGGKSTYMRQVALITLMAHIGCFVPADRALIGPIDRIFTRIGASDDLASGRSTFMVEMTETANILHNASASSLVLMDEIGRGTSTYDGLSLAWSAAEYLAQQVGAMTLFATHYFELTQLPELMAGVYNVHLDAIEHDDTIAFMHAVQEGAASKSYGLQVAALAGVPNKVIKAAKHKLQQLESRDHQAEGTRTPIQSLLALPEPVENPALTKLSNINPDNLTPKQALDLLYELKRLS.

Glycine 618–serine 625 contacts ATP.

The protein belongs to the DNA mismatch repair MutS family.

In terms of biological role, this protein is involved in the repair of mismatches in DNA. It is possible that it carries out the mismatch recognition step. This protein has a weak ATPase activity. The polypeptide is DNA mismatch repair protein MutS (Shewanella baltica (strain OS195)).